The chain runs to 64 residues: Weak toxin CM-9a (64 aa).

Intrachain disulfides connect cysteine 3-cysteine 24, cysteine 6-cysteine 11, cysteine 17-cysteine 41, cysteine 45-cysteine 56, and cysteine 57-cysteine 62.

This sequence belongs to the three-finger toxin family. Ancestral subfamily. Orphan group II sub-subfamily. Expressed by the venom gland.

The protein resides in the secreted. Functionally, binds with low affinity to muscular (alpha-1-beta-1-delta-epsilon/CHRNA1-CHRNB1-CHRND-CHRNE) and very low affinity to neuronal (alpha-7/CHRNA7) nicotinic acetylcholine receptor (nAChR). This chain is Weak toxin CM-9a, found in Naja kaouthia (Monocled cobra).